A 62-amino-acid chain; its full sequence is Large ribosomal subunit protein uL30 (62 aa).

Belongs to the universal ribosomal protein uL30 family. Part of the 50S ribosomal subunit.

The chain is Large ribosomal subunit protein uL30 from Dinoroseobacter shibae (strain DSM 16493 / NCIMB 14021 / DFL 12).